A 320-amino-acid polypeptide reads, in one-letter code: MKPLNVIFAGTPDFAARHLQALINSEHNVIAVYSRADKPAGRGKKLQASPVKMLALENEIPVYQPTSLRDEQAQAELASLNADIMVVVAYGLILPKVVLDTPKLGCINVHGSILPRWRGAAPIQRALWSGDTETGVTIMQMDIGLDTGDMLLKTQLPIEDSDTSASLYEKLAEQGPEALVEALTGLAKGELAAEKQDEALANYAEKLSKEEAELDWNKSAAQLWREIRAFNPWPISHFSHQDASIKVREAHVSQSKSQAPAGTIISAGKEGIEIATGDGVLTLLNMQLPGKKPLSVADILNSRSEWFTPGTVLNSTKEAE.

Position 112–115 (112–115 (SILP)) interacts with (6S)-5,6,7,8-tetrahydrofolate.

It belongs to the Fmt family.

The catalysed reaction is L-methionyl-tRNA(fMet) + (6R)-10-formyltetrahydrofolate = N-formyl-L-methionyl-tRNA(fMet) + (6S)-5,6,7,8-tetrahydrofolate + H(+). Its function is as follows. Attaches a formyl group to the free amino group of methionyl-tRNA(fMet). The formyl group appears to play a dual role in the initiator identity of N-formylmethionyl-tRNA by promoting its recognition by IF2 and preventing the misappropriation of this tRNA by the elongation apparatus. This chain is Methionyl-tRNA formyltransferase, found in Shewanella woodyi (strain ATCC 51908 / MS32).